The following is a 255-amino-acid chain: Triosephosphate isomerase (255 aa).

9–11 (NWK) serves as a coordination point for substrate. Residue histidine 95 is the Electrophile of the active site. Glutamate 167 functions as the Proton acceptor in the catalytic mechanism. Residues glycine 173, serine 212, and 233–234 (GG) contribute to the substrate site.

It belongs to the triosephosphate isomerase family. As to quaternary structure, homodimer.

The protein resides in the cytoplasm. It catalyses the reaction D-glyceraldehyde 3-phosphate = dihydroxyacetone phosphate. Its pathway is carbohydrate biosynthesis; gluconeogenesis. The protein operates within carbohydrate degradation; glycolysis; D-glyceraldehyde 3-phosphate from glycerone phosphate: step 1/1. In terms of biological role, involved in the gluconeogenesis. Catalyzes stereospecifically the conversion of dihydroxyacetone phosphate (DHAP) to D-glyceraldehyde-3-phosphate (G3P). This is Triosephosphate isomerase from Photorhabdus laumondii subsp. laumondii (strain DSM 15139 / CIP 105565 / TT01) (Photorhabdus luminescens subsp. laumondii).